The primary structure comprises 310 residues: Ribonuclease Z (310 aa).

Zn(2+) is bound by residues histidine 64, histidine 66, aspartate 68, histidine 69, histidine 146, aspartate 215, and histidine 273. The active-site Proton acceptor is the aspartate 68.

The protein belongs to the RNase Z family. Homodimer. Requires Zn(2+) as cofactor.

The enzyme catalyses Endonucleolytic cleavage of RNA, removing extra 3' nucleotides from tRNA precursor, generating 3' termini of tRNAs. A 3'-hydroxy group is left at the tRNA terminus and a 5'-phosphoryl group is left at the trailer molecule.. Its function is as follows. Zinc phosphodiesterase, which displays some tRNA 3'-processing endonuclease activity. Probably involved in tRNA maturation, by removing a 3'-trailer from precursor tRNA. This chain is Ribonuclease Z, found in Aeropyrum pernix (strain ATCC 700893 / DSM 11879 / JCM 9820 / NBRC 100138 / K1).